The chain runs to 143 residues: Cytotoxic L-amino-acid oxidase (143 aa).

This sequence belongs to the flavin monoamine oxidase family. It depends on FAD as a cofactor.

It carries out the reaction an L-alpha-amino acid + O2 + H2O = a 2-oxocarboxylate + H2O2 + NH4(+). In terms of biological role, cytotoxic L-amino acid oxidase with high oxidase activity towards DL-methionine and L-methionine, L-phenylalanine, DL-norleucine, L-isoleucine, L-arginine, L-tyrosine, and DL-leucine. Shows relatively low activity towards DL-lysine and L-lysine, DL-asparagine, DL-valine, L-histidine, DL-threonine, DL-tryptophan, and L-glutamic acid; and no activity towards L-cysteine, L-glycine, L-proline, L-oxyproline, DL-serine, and DL-aspartic acid. Does not use benzylamine, ethanolamine, diethylamine, meta- and para-phenylendiamine, ortho-, meta- and para-aminophenols, or putrescin as a substrate. Acts as a toxin by inducing chromatin condensation, as well as DNA and nucleus fragmentation, which are typical for apoptosis. Probably induces cell damage indirectly via the generation of free radicals and oxidant agents that can trigger cell impairment and apoptosis by a caspase-independent pathway. The sequence is that of Cytotoxic L-amino-acid oxidase from Amanita phalloides (Death cap).